Here is a 318-residue protein sequence, read N- to C-terminus: ATP synthase gamma chain (318 aa).

It belongs to the ATPase gamma chain family. As to quaternary structure, F-type ATPases have 2 components, CF(1) - the catalytic core - and CF(0) - the membrane proton channel. CF(1) has five subunits: alpha(3), beta(3), gamma(1), delta(1), epsilon(1). CF(0) has three main subunits: a, b and c.

It is found in the cell membrane. In terms of biological role, produces ATP from ADP in the presence of a proton gradient across the membrane. The gamma chain is believed to be important in regulating ATPase activity and the flow of protons through the CF(0) complex. The protein is ATP synthase gamma chain of Lactobacillus johnsonii (strain CNCM I-12250 / La1 / NCC 533).